The following is a 251-amino-acid chain: Geranylgeranylglyceryl phosphate synthase (251 aa).

Residues D25 and S54 each contribute to the Mg(2+) site. Sn-glycerol 1-phosphate contacts are provided by residues 173-179 (YLEAGSG), 204-205 (GG), and 226-227 (GT).

The protein belongs to the GGGP/HepGP synthase family. Group II subfamily. Requires Mg(2+) as cofactor.

Its subcellular location is the cytoplasm. It catalyses the reaction sn-glycerol 1-phosphate + (2E,6E,10E)-geranylgeranyl diphosphate = sn-3-O-(geranylgeranyl)glycerol 1-phosphate + diphosphate. The protein operates within membrane lipid metabolism; glycerophospholipid metabolism. Functionally, prenyltransferase that catalyzes the transfer of the geranylgeranyl moiety of geranylgeranyl diphosphate (GGPP) to the C3 hydroxyl of sn-glycerol-1-phosphate (G1P). This reaction is the first ether-bond-formation step in the biosynthesis of archaeal membrane lipids. The chain is Geranylgeranylglyceryl phosphate synthase from Pyrococcus furiosus (strain ATCC 43587 / DSM 3638 / JCM 8422 / Vc1).